The primary structure comprises 390 residues: Tryptophan synthase beta chain 2 (390 aa).

N6-(pyridoxal phosphate)lysine is present on Lys-83.

Belongs to the TrpB family. As to quaternary structure, tetramer of two alpha and two beta chains. Pyridoxal 5'-phosphate serves as cofactor.

The enzyme catalyses (1S,2R)-1-C-(indol-3-yl)glycerol 3-phosphate + L-serine = D-glyceraldehyde 3-phosphate + L-tryptophan + H2O. It participates in amino-acid biosynthesis; L-tryptophan biosynthesis; L-tryptophan from chorismate: step 5/5. The beta subunit is responsible for the synthesis of L-tryptophan from indole and L-serine. The sequence is that of Tryptophan synthase beta chain 2 (trpB2) from Methanothermobacter marburgensis (strain ATCC BAA-927 / DSM 2133 / JCM 14651 / NBRC 100331 / OCM 82 / Marburg) (Methanobacterium thermoautotrophicum).